The sequence spans 329 residues: Phenylalanine--tRNA ligase alpha subunit (329 aa).

It belongs to the class-II aminoacyl-tRNA synthetase family. Phe-tRNA synthetase alpha subunit type 1 subfamily. In terms of assembly, tetramer of two alpha and two beta subunits. Requires Mg(2+) as cofactor.

It is found in the cytoplasm. The enzyme catalyses tRNA(Phe) + L-phenylalanine + ATP = L-phenylalanyl-tRNA(Phe) + AMP + diphosphate + H(+). This chain is Phenylalanine--tRNA ligase alpha subunit (pheS), found in Buchnera aphidicola subsp. Schizaphis graminum (strain Sg).